Here is a 392-residue protein sequence, read N- to C-terminus: Phosphoglycerate kinase (392 aa).

Substrate is bound by residues 21–23, Arg-36, 59–62, Arg-114, and Arg-147; these read DMN and HLGR. ATP is bound by residues Lys-198, Glu-320, and 346 to 349; that span reads GGDT.

It belongs to the phosphoglycerate kinase family. Monomer.

It is found in the cytoplasm. It catalyses the reaction (2R)-3-phosphoglycerate + ATP = (2R)-3-phospho-glyceroyl phosphate + ADP. Its pathway is carbohydrate degradation; glycolysis; pyruvate from D-glyceraldehyde 3-phosphate: step 2/5. This Neisseria meningitidis serogroup C (strain 053442) protein is Phosphoglycerate kinase.